A 97-amino-acid polypeptide reads, in one-letter code: Nucleoid-associated protein HPAG1_0033 (97 aa).

This sequence belongs to the YbaB/EbfC family. Homodimer.

It localises to the cytoplasm. It is found in the nucleoid. Binds to DNA and alters its conformation. May be involved in regulation of gene expression, nucleoid organization and DNA protection. This Helicobacter pylori (strain HPAG1) protein is Nucleoid-associated protein HPAG1_0033.